The chain runs to 695 residues: Elongation factor G (695 aa).

Residues 8–282 (EKTRNIGIMA…AVLDYLPAPT (275 aa)) enclose the tr-type G domain. GTP-binding positions include 17-24 (AHIDAGKT), 81-85 (DTPGH), and 135-138 (NKMD).

This sequence belongs to the TRAFAC class translation factor GTPase superfamily. Classic translation factor GTPase family. EF-G/EF-2 subfamily.

It localises to the cytoplasm. Functionally, catalyzes the GTP-dependent ribosomal translocation step during translation elongation. During this step, the ribosome changes from the pre-translocational (PRE) to the post-translocational (POST) state as the newly formed A-site-bound peptidyl-tRNA and P-site-bound deacylated tRNA move to the P and E sites, respectively. Catalyzes the coordinated movement of the two tRNA molecules, the mRNA and conformational changes in the ribosome. The sequence is that of Elongation factor G from Listeria innocua serovar 6a (strain ATCC BAA-680 / CLIP 11262).